Consider the following 138-residue polypeptide: Small ribosomal subunit protein uS11c (138 aa).

The disordered stretch occupies residues 1 to 23 (MAKTIPRIGSRKNGRIGSRKNTR). Positions 9–23 (GSRKNGRIGSRKNTR) are enriched in basic residues.

It belongs to the universal ribosomal protein uS11 family. As to quaternary structure, part of the 30S ribosomal subunit.

It is found in the plastid. It localises to the chloroplast. This is Small ribosomal subunit protein uS11c from Daucus carota (Wild carrot).